Reading from the N-terminus, the 586-residue chain is NudC domain-containing protein 1 (586 aa).

Positions 259–278 (KDQPESSEDEKMDEDNKREP) are disordered. Positions 275-364 (KREPLYNWHQ…EPGSTWAELV (90 aa)) constitute a CS domain.

It is found in the cytoplasm. Its subcellular location is the nucleus. The sequence is that of NudC domain-containing protein 1 from Xenopus tropicalis (Western clawed frog).